An 898-amino-acid chain; its full sequence is Coatomer subunit gamma (898 aa).

HEAT repeat units follow at residues 62-99 (TEAT…ISQD), 170-207 (EIVK…HDRL), 280-317 (KEIN…TNPT), 319-352 (VIPC…GNES), 353-389 (NVER…KFPK), and 392-427 (KHLI…NIPE). The tract at residues 592-631 (GKSPFSTGASKKGDSVTGTPKSNNASNNNNNNEESSGPES) is disordered. A compositionally biased stretch (low complexity) spans 613 to 626 (SNNASNNNNNNEES).

Belongs to the COPG family. Oligomeric complex that consists of at least the alpha, beta, beta', gamma, delta, epsilon and zeta subunits.

The protein resides in the cytoplasm. It localises to the golgi apparatus membrane. Its subcellular location is the cytoplasmic vesicle. The protein localises to the COPI-coated vesicle membrane. Functionally, the coatomer is a cytosolic protein complex that binds to dilysine motifs and reversibly associates with Golgi non-clathrin-coated vesicles, which further mediate biosynthetic protein transport from the ER, via the Golgi up to the trans Golgi network. Coatomer complex is required for budding from Golgi membranes, and is essential for the retrograde Golgi-to-ER transport of dilysine-tagged proteins. The polypeptide is Coatomer subunit gamma (copG) (Dictyostelium discoideum (Social amoeba)).